The primary structure comprises 456 residues: Na(+)/H(+) antiporter NhaA 3 (456 aa).

The next 11 helical transmembrane spans lie at 32–52 (IEAT…TLSN), 87–107 (GLMT…VVLG), 114–134 (MVAL…GLYL), 145–165 (GWGV…ALLG), 174–194 (VFLL…VAVG), 202–222 (TALA…LLGV), 233–253 (AIIW…GVIL), 318–338 (WVAF…PITI), 347–367 (LAVM…FAWL), 382–402 (WGGL…ALFI), and 417–437 (LGIL…LCAL).

It belongs to the NhaA Na(+)/H(+) (TC 2.A.33) antiporter family.

It localises to the cell inner membrane. The enzyme catalyses Na(+)(in) + 2 H(+)(out) = Na(+)(out) + 2 H(+)(in). Its function is as follows. Na(+)/H(+) antiporter that extrudes sodium in exchange for external protons. This Acidiphilium cryptum (strain JF-5) protein is Na(+)/H(+) antiporter NhaA 3.